Here is a 388-residue protein sequence, read N- to C-terminus: Succinate--CoA ligase [ADP-forming] subunit beta (388 aa).

Positions 9–244 constitute an ATP-grasp domain; it reads KQLFAEYGLP…PSQDDPREAH (236 aa). Residues Lys46, 53-55, Glu99, Thr102, and Glu107 contribute to the ATP site; that span reads GRG. 2 residues coordinate Mg(2+): Asn199 and Asp213. Residues Asn264 and 321-323 contribute to the substrate site; that span reads GIV.

Belongs to the succinate/malate CoA ligase beta subunit family. Heterotetramer of two alpha and two beta subunits. Mg(2+) is required as a cofactor.

The enzyme catalyses succinate + ATP + CoA = succinyl-CoA + ADP + phosphate. It carries out the reaction GTP + succinate + CoA = succinyl-CoA + GDP + phosphate. The protein operates within carbohydrate metabolism; tricarboxylic acid cycle; succinate from succinyl-CoA (ligase route): step 1/1. In terms of biological role, succinyl-CoA synthetase functions in the citric acid cycle (TCA), coupling the hydrolysis of succinyl-CoA to the synthesis of either ATP or GTP and thus represents the only step of substrate-level phosphorylation in the TCA. The beta subunit provides nucleotide specificity of the enzyme and binds the substrate succinate, while the binding sites for coenzyme A and phosphate are found in the alpha subunit. This Aeromonas hydrophila subsp. hydrophila (strain ATCC 7966 / DSM 30187 / BCRC 13018 / CCUG 14551 / JCM 1027 / KCTC 2358 / NCIMB 9240 / NCTC 8049) protein is Succinate--CoA ligase [ADP-forming] subunit beta.